The chain runs to 271 residues: 3-methyl-2-oxobutanoate hydroxymethyltransferase (271 aa).

Residues aspartate 49 and aspartate 88 each coordinate Mg(2+). Residues 49-50 (DS), aspartate 88, and lysine 118 contribute to the 3-methyl-2-oxobutanoate site. Glutamate 120 provides a ligand contact to Mg(2+). Residue glutamate 187 is the Proton acceptor of the active site.

It belongs to the PanB family. Homodecamer; pentamer of dimers. Requires Mg(2+) as cofactor.

The protein resides in the cytoplasm. The enzyme catalyses 3-methyl-2-oxobutanoate + (6R)-5,10-methylene-5,6,7,8-tetrahydrofolate + H2O = 2-dehydropantoate + (6S)-5,6,7,8-tetrahydrofolate. It participates in cofactor biosynthesis; (R)-pantothenate biosynthesis; (R)-pantoate from 3-methyl-2-oxobutanoate: step 1/2. Catalyzes the reversible reaction in which hydroxymethyl group from 5,10-methylenetetrahydrofolate is transferred onto alpha-ketoisovalerate to form ketopantoate. The sequence is that of 3-methyl-2-oxobutanoate hydroxymethyltransferase from Bartonella tribocorum (strain CIP 105476 / IBS 506).